The following is a 243-amino-acid chain: Mannosyl-3-phosphoglycerate phosphatase (243 aa).

The Nucleophile role is filled by aspartate 8. Residues aspartate 8, aspartate 10, serine 169, and aspartate 204 each contribute to the Mg(2+) site.

The protein belongs to the HAD-like hydrolase superfamily. MPGP family. Mg(2+) serves as cofactor.

Its subcellular location is the cytoplasm. It catalyses the reaction 2-O-(alpha-D-mannosyl)-3-phosphoglycerate + H2O = (2R)-2-O-(alpha-D-mannosyl)-glycerate + phosphate. Its pathway is carbohydrate biosynthesis; 2-(alpha-D-mannosyl)-D-glycerate biosynthesis; 2-(alpha-D-mannosyl)-D-glycerate from GDP-alpha-D-mannose (MPG route): step 2/2. In terms of biological role, hydrolyzes mannosyl-3-phosphoglycerate (MPG) to form the osmolyte mannosylglycerate (MG). The enzyme is absolutely specific for MPG. In Pyrococcus horikoshii (strain ATCC 700860 / DSM 12428 / JCM 9974 / NBRC 100139 / OT-3), this protein is Mannosyl-3-phosphoglycerate phosphatase.